We begin with the raw amino-acid sequence, 182 residues long: Ribosome-recycling factor (182 aa).

This sequence belongs to the RRF family.

The protein localises to the cytoplasm. In terms of biological role, responsible for the release of ribosomes from messenger RNA at the termination of protein biosynthesis. May increase the efficiency of translation by recycling ribosomes from one round of translation to another. The protein is Ribosome-recycling factor of Synechococcus sp. (strain WH7803).